The chain runs to 118 residues: UPF0295 protein BCE33L0445 (118 aa).

Transmembrane regions (helical) follow at residues 12 to 32 (IRTF…LGVF) and 43 to 63 (FMMV…WIGM).

Belongs to the UPF0295 family.

It localises to the cell membrane. The sequence is that of UPF0295 protein BCE33L0445 from Bacillus cereus (strain ZK / E33L).